Reading from the N-terminus, the 54-residue chain is Large ribosomal subunit protein bL33B (54 aa).

It belongs to the bacterial ribosomal protein bL33 family.

This is Large ribosomal subunit protein bL33B from Mycobacterium sp. (strain KMS).